The chain runs to 129 residues: Small ribosomal subunit protein uS12 (129 aa).

3-methylthioaspartic acid is present on Asp89. The segment at 101–129 (SLDTSGVADRKQSRSKYGAKQPKAGAAKK) is disordered. Over residues 116 to 129 (KYGAKQPKAGAAKK) the composition is skewed to low complexity.

It belongs to the universal ribosomal protein uS12 family. As to quaternary structure, part of the 30S ribosomal subunit. Contacts proteins S8 and S17. May interact with IF1 in the 30S initiation complex.

In terms of biological role, with S4 and S5 plays an important role in translational accuracy. Interacts with and stabilizes bases of the 16S rRNA that are involved in tRNA selection in the A site and with the mRNA backbone. Located at the interface of the 30S and 50S subunits, it traverses the body of the 30S subunit contacting proteins on the other side and probably holding the rRNA structure together. The combined cluster of proteins S8, S12 and S17 appears to hold together the shoulder and platform of the 30S subunit. The polypeptide is Small ribosomal subunit protein uS12 (Chlorobaculum parvum (strain DSM 263 / NCIMB 8327) (Chlorobium vibrioforme subsp. thiosulfatophilum)).